We begin with the raw amino-acid sequence, 669 residues long: DNA ligase (669 aa).

Residues 34-38 (DAEYD), 83-84 (SL), and glutamate 113 each bind NAD(+). The N6-AMP-lysine intermediate role is filled by lysine 115. NAD(+)-binding residues include arginine 136, glutamate 170, lysine 286, and lysine 310. The Zn(2+) site is built by cysteine 404, cysteine 407, cysteine 422, and cysteine 427. Positions 591-669 (IADSPFAGKT…EEALVKAISH (79 aa)) constitute a BRCT domain.

Belongs to the NAD-dependent DNA ligase family. LigA subfamily. Requires Mg(2+) as cofactor. Mn(2+) is required as a cofactor.

The catalysed reaction is NAD(+) + (deoxyribonucleotide)n-3'-hydroxyl + 5'-phospho-(deoxyribonucleotide)m = (deoxyribonucleotide)n+m + AMP + beta-nicotinamide D-nucleotide.. In terms of biological role, DNA ligase that catalyzes the formation of phosphodiester linkages between 5'-phosphoryl and 3'-hydroxyl groups in double-stranded DNA using NAD as a coenzyme and as the energy source for the reaction. It is essential for DNA replication and repair of damaged DNA. This Halalkalibacterium halodurans (strain ATCC BAA-125 / DSM 18197 / FERM 7344 / JCM 9153 / C-125) (Bacillus halodurans) protein is DNA ligase.